The sequence spans 140 residues: MNRAKVLSSYLGLLRTEKKVFQNDKRALEHVINLTRVQFRDNKNETDNTKINEMIDHANAVSHFLVKDLIQGVRKDEKTIQLKFDENTKSYQQYEFVNDQPPQRKKRGKIQIDDEQPTTCCGGGCGKPMPSNNSEKSTCS.

Positions 93 to 140 are disordered; it reads QYEFVNDQPPQRKKRGKIQIDDEQPTTCCGGGCGKPMPSNNSEKSTCS. Polar residues predominate over residues 130-140; that stretch reads PSNNSEKSTCS.

Belongs to the complex I LYR family. As to quaternary structure, interacts with UQCRFS1.

The protein localises to the mitochondrion matrix. Functionally, assembly factor required for Rieske Fe-S protein UQCRFS1 incorporation into the cytochrome b-c1 (CIII) complex. Functions as a chaperone, binding to this subunit within the mitochondrial matrix and stabilizing it prior to its translocation and insertion into the late CIII dimeric intermediate within the mitochondrial inner membrane. The chain is Complex III assembly factor LYRM7 (lyrm7) from Dictyostelium discoideum (Social amoeba).